The chain runs to 150 residues: UPF0178 protein Sbal223_2514 (150 aa).

This sequence belongs to the UPF0178 family.

This chain is UPF0178 protein Sbal223_2514, found in Shewanella baltica (strain OS223).